Here is a 258-residue protein sequence, read N- to C-terminus: Venom plasminogen activator GPV-PA (258 aa).

An N-terminal signal peptide occupies residues 1-18 (MVLIRVLANLLILQLSYA). The propeptide occupies 19-24 (QKSSEL). The region spanning 25 to 249 (VFGGRPCNIN…YTDWIQSIIA (225 aa)) is the Peptidase S1 domain. Disulfide bonds link C31–C163, C50–C66, C98–C256, C142–C210, C174–C189, and C200–C225. An N-linked (GlcNAc...) asparagine glycan is attached at N44. Residues H65 and D110 each act as charge relay system in the active site. N-linked (GlcNAc...) asparagine glycosylation is found at N121 and N185. S204 serves as the catalytic Charge relay system.

It belongs to the peptidase S1 family. Snake venom subfamily. In terms of assembly, monomer. In terms of tissue distribution, expressed by the venom gland.

Its subcellular location is the secreted. Snake venom serine protease that activates plasminogen. The sequence is that of Venom plasminogen activator GPV-PA from Trimeresurus albolabris (White-lipped pit viper).